The following is a 386-amino-acid chain: Heavy metal-associated isoprenylated plant protein 5 (386 aa).

The segment covering 1–16 has biased composition (basic and acidic residues); the sequence is MGEVQEGPKVEQEKKP. Residues 1–40 are disordered; it reads MGEVQEGPKVEQEKKPAATVVPVETTDGKPKSGGGDSAAA. One can recognise an HMA 1 domain in the interval 49–112; it reads VSAFVYKVDM…KLEEKTKRKV (64 aa). 2 residues coordinate a metal cation: C60 and C63. A disordered region spans residues 129–153; sequence VGEKKADGGDKEAAPPAPAPAAPKE. Basic and acidic residues predominate over residues 130 to 141; it reads GEKKADGGDKEA. Residues 153 to 220 form the HMA 2 domain; sequence ESVVPLKIRL…KLKRTVEPLV (68 aa). A metal cation-binding residues include C164 and C167. 2 stretches are compositionally biased toward basic and acidic residues: residues 223–245 and 252–297; these read KKDDGAAENKKTEAAAPDAKKEA and EAKK…KKDG. Positions 223–301 are disordered; that stretch reads KKDDGAAENK…EKKKDGGGVP (79 aa). C383 bears the Cysteine methyl ester mark. C383 carries S-farnesyl cysteine lipidation. Positions 384-386 are cleaved as a propeptide — removed in mature form; sequence SVM.

The protein belongs to the HIPP family. In terms of processing, efficiently farnesylated in vitro.

Its function is as follows. Heavy-metal-binding protein. Involved in disease resistance. This chain is Heavy metal-associated isoprenylated plant protein 5, found in Arabidopsis thaliana (Mouse-ear cress).